The chain runs to 994 residues: MSQWTPEYNELYTLKVDMKSEIPSDAPKTQESLKGILLHPEPIGAAKSFPAGVEMINSKVGNEFSHLCDDSQKQEKEMNGNQQEQEKSLVVRKKRKSQQAGPSYVQNCVKENQGILGLRQHLGTPSDEDNDSSFSDCLSSPSSSLHFGDSDTVTSDEDKEVSVRHSQTILNAKSRSHSARSHKWPRTETESVSGLLMKRPCLHGSSLRRLPCRKRFVKNNSSQRTQKQKERILMQRKKREVLARRKYALLPSSSSSSENDLSSESSSSSSTEGEEDLFVSASENHQNNPAVPSGSIDEDVVVIEASSTPQVTANEEINVTSTDSEVEIVTVGESYRSRSTLGHSRSHWSQGSSSHASRPQEPRNRSRISTVIQPLRQNAAEVVDLTVDEDEPTVVPTTSARMESQATSASINNSNPSTSEQASDTASAVTSSQPSTVSETSATLTSNSTTGTSIGDDSRRTTSSAVTETGPPAMPRLPSCCPQHSPCGGSSQNHHALGHPHTSCFQQHGHHFQHHHHHHHTPHPAVPVSPSFSDPACPVERPPQVQAPCGANSSSGTSYHEQQALPVDLSNSGIRSHGSGSFHGASAFDPCCPVSSSRAAIFGHQAAAAAPSQPLSSIDGYGSSMVAQPQPQPPPQPSLSSCRHYMPPPYASLTRPLHHQASACPHSHGNPPPQTQPPPQVDYVIPHPVHAFHSQISSHATSHPVAPPPPTHLASTAAPIPQHLPPTHQPISHHIPATAPPAQRLHPHEVMQRMEVQRRRMMQHPTRAHERPPPHPHRMHPNYGHGHHIHVPQTMSSHPRQAPERSAWELGIEAGVTAATYTPGALHPHLAHYHAPPRLHHLQLGALPLMVPDMAGYPHIRYISSGLDGTSFRGPFRGNFEELIHLEERLGNVNRGASQGTIERCTYPHKYKKVTTDWFSQRKLHCKQDGEEGTEEDTEEKCTICLSILEEGEDVRRLPCMHLFHQVCVDQWLITNKKCPICRVDIEAQLPSES.

Residues Lys19, Lys28, Lys34, Lys47, Lys59, Lys73, Lys87, Lys96, and Lys110 each participate in a glycyl lysine isopeptide (Lys-Gly) (interchain with G-Cter in SUMO2) cross-link. Basic and acidic residues predominate over residues 66-89 (HLCDDSQKQEKEMNGNQQEQEKSL). The interval 66-106 (HLCDDSQKQEKEMNGNQQEQEKSLVVRKKRKSQQAGPSYVQ) is disordered. Residues 120-191 (QHLGTPSDED…HKWPRTETES (72 aa)) are disordered. The span at 132 to 151 (SSFSDCLSSPSSSLHFGDSD) shows a compositional bias: low complexity. Positions 164-173 (RHSQTILNAK) are enriched in polar residues. Lys173 is covalently cross-linked (Glycyl lysine isopeptide (Lys-Gly) (interchain with G-Cter in SUMO2)). Over residues 174–184 (SRSHSARSHKW) the composition is skewed to basic residues. Residues Lys198 and Lys218 each participate in a glycyl lysine isopeptide (Lys-Gly) (interchain with G-Cter in SUMO2) cross-link. The disordered stretch occupies residues 212–277 (CRKRFVKNNS…SSSTEGEEDL (66 aa)). Over residues 234–247 (MQRKKREVLARRKY) the composition is skewed to basic residues. The tract at residues 241 to 404 (VLARRKYALL…VPTTSARMES (164 aa)) is interaction with AXIN1. Residues 252–271 (SSSSSSENDLSSESSSSSST) are compositionally biased toward low complexity. The short motif at 300-304 (VVVIE) is the SUMO interaction motif 1 (SIM) element. The short motif at 325–331 (EVEIVTV) is the SUMO interaction motif 2 (SIM) element. Residues 337 to 371 (SRSTLGHSRSHWSQGSSSHASRPQEPRNRSRISTV) are disordered. Low complexity predominate over residues 347 to 357 (HWSQGSSSHAS). Residues 382–386 (VVDLT) carry the SUMO interaction motif 3 (SIM) motif. Disordered regions lie at residues 388–476 (DEDE…AMPR), 508–537 (HGHH…DPAC), 610–684 (APSQ…VDYV), and 696–742 (ISSH…APPA). A compositionally biased stretch (polar residues) spans 395–467 (VPTTSARMES…SRRTTSSAVT (73 aa)). Residues 508–522 (HGHHFQHHHHHHHTP) show a composition bias toward basic residues. Positions 670 to 680 (NPPPQTQPPPQ) are enriched in pro residues. The tract at residues 907-909 (YPH) is ubiquitin binding. Glycyl lysine isopeptide (Lys-Gly) (interchain with G-Cter in SUMO2) cross-links involve residues Lys923 and Lys927. Residues Cys942 and Cys945 each coordinate Zn(2+). Residues 942–983 (CTICLSILEEGEDVRRLPCMHLFHQVCVDQWLITNKKCPICR) form an RING-type; atypical zinc finger. The ubiquitin binding stretch occupies residues 957–961 (RLPCM). His965 and Cys968 together coordinate Zn(2+).

The protein belongs to the Arkadia family. In terms of assembly, monomer. Interacts with SMAD6, SMAD7, AXIN1, AXIN2 and SKIL isoform SNON. Interacts with (phosphorylated) SMAD2 and SMAD3. Part of a complex containing RNF111, AXIN1 and SMAD7. Interacts (via SIM domains) with SUMO1 and SUMO2. Broadly expressed.

It is found in the nucleus. The protein resides in the cytoplasm. The protein localises to the PML body. The enzyme catalyses S-ubiquitinyl-[E2 ubiquitin-conjugating enzyme]-L-cysteine + [acceptor protein]-L-lysine = [E2 ubiquitin-conjugating enzyme]-L-cysteine + N(6)-ubiquitinyl-[acceptor protein]-L-lysine.. It functions in the pathway protein modification; protein ubiquitination. Its activity is regulated as follows. Binds free ubiquitin non-covalently via its RING-type zinc finger. Ubiquitin-binding leads to enhance the E3 ubiquitin-protein ligase activity by stabilizing the ubiquitin-conjugating enzyme E2 (donor ubiquitin) in the 'closed' conformation and activating ubiquitin transfer. Its function is as follows. E3 ubiquitin-protein ligase. Required for mesoderm patterning during embryonic development. Acts as an enhancer of the transcriptional responses of the SMAD2/SMAD3 effectors, which are activated downstream of BMP. Acts by mediating ubiquitination and degradation of SMAD inhibitors such as SMAD7, inducing their proteasomal degradation and thereby enhancing the transcriptional activity of TGF-beta and BMP. In addition to enhance transcription of SMAD2/SMAD3 effectors, also regulates their turnover by mediating their ubiquitination and subsequent degradation, coupling their activation with degradation, thereby ensuring that only effectors 'in use' are degraded. Activates SMAD3/SMAD4-dependent transcription by triggering signal-induced degradation of SNON isoform of SKIL. Associates with UBE2D2 as an E2 enzyme. Specifically binds polysumoylated chains via SUMO interaction motifs (SIMs) and mediates ubiquitination of sumoylated substrates. Catalyzes 'Lys-63'-linked ubiquitination of sumoylated XPC in response to UV irradiation, promoting nucleotide excision repair. Mediates ubiquitination and degradation of sumoylated PML. The regulation of the BMP-SMAD signaling is however independent of sumoylation and is not dependent of SUMO interaction motifs (SIMs). This is E3 ubiquitin-protein ligase Arkadia from Homo sapiens (Human).